Here is a 101-residue protein sequence, read N- to C-terminus: Vacuolar ATPase assembly integral membrane protein VMA21 (101 aa).

Residues 1-25 (MERLDKAALNALQPSDFRNESSLAS) lie on the Cytoplasmic side of the membrane. Residues 26 to 46 (TLKTLLFFTALMITVPIGLYF) form a helical membrane-spanning segment. Residues 47–65 (TTKSYVFEGAFGMSNRDSY) lie on the Lumenal side of the membrane. The chain crosses the membrane as a helical span at residues 66–86 (FYAAIVAVVAVHVVLALFVYV). Topologically, residues 87 to 101 (AWNEGSRQWREGKQD) are cytoplasmic.

Belongs to the VMA21 family. Associates with the V0 complex of the vacuolar ATPase (V-ATPase). Interacts with ATP6AP2.

The protein localises to the endoplasmic reticulum membrane. Its subcellular location is the endoplasmic reticulum-Golgi intermediate compartment membrane. The protein resides in the cytoplasmic vesicle. It is found in the COPII-coated vesicle membrane. In terms of biological role, required for the assembly of the V0 complex of the vacuolar ATPase (V-ATPase) in the endoplasmic reticulum. The chain is Vacuolar ATPase assembly integral membrane protein VMA21 from Bos taurus (Bovine).